Here is a 351-residue protein sequence, read N- to C-terminus: Phosphate acetyltransferase (351 aa).

This sequence belongs to the phosphate acetyltransferase and butyryltransferase family.

The protein resides in the cytoplasm. The enzyme catalyses acetyl-CoA + phosphate = acetyl phosphate + CoA. The protein operates within metabolic intermediate biosynthesis; acetyl-CoA biosynthesis; acetyl-CoA from acetate: step 2/2. The protein is Phosphate acetyltransferase (pta) of Rickettsia prowazekii (strain Madrid E).